The sequence spans 57 residues: UPF0391 membrane protein BRADO2787 (57 aa).

Transmembrane regions (helical) follow at residues 6-26 (WALLFFVISVVAGILGFTGVS) and 35-55 (ILFYIFLVIFLVLLILGLTIF).

The protein belongs to the UPF0391 family.

It localises to the cell membrane. The sequence is that of UPF0391 membrane protein BRADO2787 from Bradyrhizobium sp. (strain ORS 278).